A 340-amino-acid chain; its full sequence is MKKKLLVLTMSTLFATQLINSNHAKASVTESVDKKFVVPESGINKIIPAYDEFKNSPKVNVSNLTDNKNFVVSEDKLNKIVDSSAASKIVDKNFAVPESKLGNIVPEYKEINNRVNVATNNPASQQVDKHFVAKGPEVNRFITQNKVNHHFITTQTHYKKVITSYKSTHVHKHVNHAKDSINKHFIVKPSESPRYTHPSQSLIIKHHFAVPGYHAHKFVTPGHASIKINHFCVVPQINSFKVIPPYGHNSHRMHVPSFQNNTTATHQNAKVNKAYDYKYFYSYKVVKGVKKYFSFSQSNGYKIGKPSLNIKNVNYQYAVPSYSPTHYVPEFKGSLPAPRV.

Positions 1 to 26 (MKKKLLVLTMSTLFATQLINSNHAKA) are cleaved as a signal peptide.

Its subcellular location is the cell surface. Adhesin that binds to the host cell extracellular matrix proteins fibronectin, fibrinogen, collagen, and vitronectin. This Staphylococcus aureus (strain Mu50 / ATCC 700699) protein is Extracellular matrix protein-binding protein emp (emp).